The sequence spans 367 residues: tRNA 2-selenouridine synthase (367 aa).

One can recognise a Rhodanese domain in the interval 12–135; the sequence is FLSGVAMLDV…MRGFLIETTD (124 aa). C95 serves as the catalytic S-selanylcysteine intermediate.

This sequence belongs to the SelU family. Monomer.

The enzyme catalyses 5-methylaminomethyl-2-thiouridine(34) in tRNA + selenophosphate + (2E)-geranyl diphosphate + H2O + H(+) = 5-methylaminomethyl-2-selenouridine(34) in tRNA + (2E)-thiogeraniol + phosphate + diphosphate. The catalysed reaction is 5-methylaminomethyl-2-thiouridine(34) in tRNA + (2E)-geranyl diphosphate = 5-methylaminomethyl-S-(2E)-geranyl-thiouridine(34) in tRNA + diphosphate. It carries out the reaction 5-methylaminomethyl-S-(2E)-geranyl-thiouridine(34) in tRNA + selenophosphate + H(+) = 5-methylaminomethyl-2-(Se-phospho)selenouridine(34) in tRNA + (2E)-thiogeraniol. It catalyses the reaction 5-methylaminomethyl-2-(Se-phospho)selenouridine(34) in tRNA + H2O = 5-methylaminomethyl-2-selenouridine(34) in tRNA + phosphate. Its function is as follows. Involved in the post-transcriptional modification of the uridine at the wobble position (U34) of tRNA(Lys), tRNA(Glu) and tRNA(Gln). Catalyzes the conversion of 2-thiouridine (S2U-RNA) to 2-selenouridine (Se2U-RNA). Acts in a two-step process involving geranylation of 2-thiouridine (S2U) to S-geranyl-2-thiouridine (geS2U) and subsequent selenation of the latter derivative to 2-selenouridine (Se2U) in the tRNA chain. The chain is tRNA 2-selenouridine synthase from Cupriavidus necator (strain ATCC 17699 / DSM 428 / KCTC 22496 / NCIMB 10442 / H16 / Stanier 337) (Ralstonia eutropha).